A 364-amino-acid polypeptide reads, in one-letter code: Aromatic prenyltransferase (364 aa).

The first 22 residues, 1-22 (MDRNQWTLALMALMRFAHRAFI), serve as a signal peptide directing secretion. N-linked (GlcNAc...) asparagine glycosylation is found at Asn142 and Asn337.

It belongs to the aromatic prenyltransferase family.

Prenyltransferase that attaches isoprenoid moieties to carbon atoms of aromatic substrates in an enzyme-catalyzed Friedel-Crafts reaction. The polypeptide is Aromatic prenyltransferase (Talaromyces marneffei (strain ATCC 18224 / CBS 334.59 / QM 7333) (Penicillium marneffei)).